A 110-amino-acid polypeptide reads, in one-letter code: Phosphoribosyl-ATP pyrophosphatase (110 aa).

This sequence belongs to the PRA-PH family.

Its subcellular location is the cytoplasm. It carries out the reaction 1-(5-phospho-beta-D-ribosyl)-ATP + H2O = 1-(5-phospho-beta-D-ribosyl)-5'-AMP + diphosphate + H(+). Its pathway is amino-acid biosynthesis; L-histidine biosynthesis; L-histidine from 5-phospho-alpha-D-ribose 1-diphosphate: step 2/9. The sequence is that of Phosphoribosyl-ATP pyrophosphatase from Pseudomonas syringae pv. syringae (strain B728a).